A 178-amino-acid chain; its full sequence is ATP-dependent protease subunit HslV (178 aa).

Residue threonine 8 is part of the active site. Na(+) is bound by residues glycine 163, cysteine 166, and threonine 169.

The protein belongs to the peptidase T1B family. HslV subfamily. In terms of assembly, a double ring-shaped homohexamer of HslV is capped on each side by a ring-shaped HslU homohexamer. The assembly of the HslU/HslV complex is dependent on binding of ATP.

It localises to the cytoplasm. The catalysed reaction is ATP-dependent cleavage of peptide bonds with broad specificity.. Allosterically activated by HslU binding. Its function is as follows. Protease subunit of a proteasome-like degradation complex believed to be a general protein degrading machinery. This Treponema denticola (strain ATCC 35405 / DSM 14222 / CIP 103919 / JCM 8153 / KCTC 15104) protein is ATP-dependent protease subunit HslV.